The following is a 180-amino-acid chain: Translation initiation factor IF-3 (180 aa).

It belongs to the IF-3 family. Monomer.

Its subcellular location is the cytoplasm. Functionally, IF-3 binds to the 30S ribosomal subunit and shifts the equilibrium between 70S ribosomes and their 50S and 30S subunits in favor of the free subunits, thus enhancing the availability of 30S subunits on which protein synthesis initiation begins. The chain is Translation initiation factor IF-3 from Xylella fastidiosa (strain Temecula1 / ATCC 700964).